We begin with the raw amino-acid sequence, 851 residues long: MLQTLISKFLGSRNNKLIKHYLKEVQAINALESTYNTLSDAQLQEAFMQLRKLIQNGETSLQSILHKSFAITREASKRVLGMRHFDVQLIGGMALNDGRIAEMKTGEGKTLVATLAVCLNALCGRGVHVVTVNDYLANRDAKELEPLYNFLGFEVGIITSEVRDDNERLQAYACDIVYGTNNEFGFDYLRDNMKYDLSQKVQGEHYFAIIDEVDSILIDEARTPLIISGPVNRTLEHYQLANSVAQRLKNEEDFSIDEKNRVILLNEEGIKKAESLFKVDNLYSIENAALSHHLDQALKANYLFIKDKDYVVQNDEVVIVDEFTGRLSEGRRFSEGLHQAIEAKEKVDIKEESQTLADITFQNYFRLYEKLSGMTGTAQTEASEFLQIYNLEVVSIPTNVPVQRKDLNDLIYKSEKEKFNAVIDKIQELYKKGQPVLVGTASIEKSEILHELLKKHRIPHTVLNAKQHTKEAEIIKDAGVKGAVTIATNMAGRGVDIKINDEIRELGGLYIIGTERHESRRIDNQLRGRAGRQGDPGISQFYLSLEDSLLRIFGSDKIKGIMERLGLKEGEHIESGLVTRSVESAQKKVENLHFESRKHLLEYDDVANEQRKAVYKLRNELLDENCSLQERISTNRELTAQSMLYKAQILPGDDSSNFNIDSLKAQINEELGLEIGNCENLDYDELLEKLITQMNTAYEEKMSKLEESQRAQIERIIYLQVLDSSWREHLYTMDNLKTGIGLRGYNQKDPLVEYKKESYNLFLEFVENLKFETTKMLQIIQLRDKEEEVANKMIKNLQDELEENLQDLNTNMDSTPVRKNKIARNDPCPCGSGKKYKVCHGKSGPKSGLLA.

ATP is bound by residues glutamine 88, 106–110, and aspartate 496; that span reads GEGKT. Cysteine 828, cysteine 830, cysteine 839, and histidine 840 together coordinate Zn(2+).

Belongs to the SecA family. In terms of assembly, monomer and homodimer. Part of the essential Sec protein translocation apparatus which comprises SecA, SecYEG and auxiliary proteins SecDF-YajC and YidC. Zn(2+) is required as a cofactor.

Its subcellular location is the cell inner membrane. The protein localises to the cytoplasm. The enzyme catalyses ATP + H2O + cellular proteinSide 1 = ADP + phosphate + cellular proteinSide 2.. Part of the Sec protein translocase complex. Interacts with the SecYEG preprotein conducting channel. Has a central role in coupling the hydrolysis of ATP to the transfer of proteins into and across the cell membrane, serving as an ATP-driven molecular motor driving the stepwise translocation of polypeptide chains across the membrane. This is Protein translocase subunit SecA from Helicobacter hepaticus (strain ATCC 51449 / 3B1).